Here is a 194-residue protein sequence, read N- to C-terminus: dTTP/UTP pyrophosphatase (194 aa).

The active-site Proton acceptor is the aspartate 77.

The protein belongs to the Maf family. YhdE subfamily. The cofactor is a divalent metal cation.

The protein resides in the cytoplasm. The catalysed reaction is dTTP + H2O = dTMP + diphosphate + H(+). It catalyses the reaction UTP + H2O = UMP + diphosphate + H(+). Nucleoside triphosphate pyrophosphatase that hydrolyzes dTTP and UTP. May have a dual role in cell division arrest and in preventing the incorporation of modified nucleotides into cellular nucleic acids. The chain is dTTP/UTP pyrophosphatase from Flavobacterium johnsoniae (strain ATCC 17061 / DSM 2064 / JCM 8514 / BCRC 14874 / CCUG 350202 / NBRC 14942 / NCIMB 11054 / UW101) (Cytophaga johnsonae).